The chain runs to 130 residues: MRLMISVLAICIGASLGALARWRLGLWLNPGAVLPLGTLAANLIGGYLIGICVAVFQALPNLDPVWRLALITGFLGGLTTFSSFSAEVVGMLGQQRYALGFGTAGLHLFGSLLLTLAGIKTATFLIAFNT.

The next 4 helical transmembrane spans lie at 7–27, 36–56, 69–89, and 99–119; these read VLAI…LGLW, LGTL…VAVF, ALIT…AEVV, and LGFG…LAGI. Gly-76 and Thr-79 together coordinate Na(+).

Belongs to the fluoride channel Fluc/FEX (TC 1.A.43) family.

The protein resides in the cell inner membrane. The catalysed reaction is fluoride(in) = fluoride(out). Na(+) is not transported, but it plays an essential structural role and its presence is essential for fluoride channel function. In terms of biological role, fluoride-specific ion channel. Important for reducing fluoride concentration in the cell, thus reducing its toxicity. This chain is Fluoride-specific ion channel FluC, found in Albidiferax ferrireducens (strain ATCC BAA-621 / DSM 15236 / T118) (Rhodoferax ferrireducens).